Here is a 284-residue protein sequence, read N- to C-terminus: Undecaprenyl-diphosphatase (284 aa).

The next 8 helical transmembrane spans lie at 1–21, 43–63, 88–108, 116–136, 149–169, 193–213, 225–245, and 259–279; these read MNWLHAIILGIVEGITEFLPV, ITAFTAIIQVGAIIAAILYFW, YTLGWGIILGSIPVGVVGLVF, LSSLWVVAIALILWSGVMWLG, IGIVDAIVIGCFQALAPLFPG, LSFFMGIPALVAAGIYESVSA, VAIGWGPTILATVVSLIVAYV, and FTGFMWYRVVVGLIIIGLILS.

It belongs to the UppP family.

The protein resides in the cell membrane. It catalyses the reaction di-trans,octa-cis-undecaprenyl diphosphate + H2O = di-trans,octa-cis-undecaprenyl phosphate + phosphate + H(+). Catalyzes the dephosphorylation of undecaprenyl diphosphate (UPP). Confers resistance to bacitracin. This Cutibacterium acnes (strain DSM 16379 / KPA171202) (Propionibacterium acnes) protein is Undecaprenyl-diphosphatase.